Here is a 539-residue protein sequence, read N- to C-terminus: Eukaryotic translation initiation factor 3 subunit L (539 aa).

The region spanning 306-514 (TFSDILLYIQ…IHIADTKVSH (209 aa)) is the PCI domain.

The protein belongs to the eIF-3 subunit L family. In terms of assembly, component of the eukaryotic translation initiation factor 3 (eIF-3) complex. The eIF-3 complex interacts with pix.

Its subcellular location is the cytoplasm. Its function is as follows. Component of the eukaryotic translation initiation factor 3 (eIF-3) complex, which is involved in protein synthesis of a specialized repertoire of mRNAs and, together with other initiation factors, stimulates binding of mRNA and methionyl-tRNAi to the 40S ribosome. The eIF-3 complex specifically targets and initiates translation of a subset of mRNAs involved in cell proliferation. This is Eukaryotic translation initiation factor 3 subunit L from Drosophila yakuba (Fruit fly).